A 185-amino-acid chain; its full sequence is Ribosome-recycling factor (185 aa).

Belongs to the RRF family.

It localises to the cytoplasm. Its function is as follows. Responsible for the release of ribosomes from messenger RNA at the termination of protein biosynthesis. May increase the efficiency of translation by recycling ribosomes from one round of translation to another. The protein is Ribosome-recycling factor of Mycobacteroides abscessus (strain ATCC 19977 / DSM 44196 / CCUG 20993 / CIP 104536 / JCM 13569 / NCTC 13031 / TMC 1543 / L948) (Mycobacterium abscessus).